The following is a 464-amino-acid chain: Protein FAM90A12 (464 aa).

Disordered regions lie at residues M1–L42, P70–A389, and A411–P437. Composition is skewed to basic and acidic residues over residues G74–A89 and N97–R114. Low complexity predominate over residues L180–L197.

This sequence belongs to the FAM90 family.

The protein is Protein FAM90A12 of Homo sapiens (Human).